A 438-amino-acid chain; its full sequence is UDP-N-acetylmuramoylalanine--D-glutamate ligase (438 aa).

112–118 (GSNGKST) is an ATP binding site.

Belongs to the MurCDEF family.

It is found in the cytoplasm. It catalyses the reaction UDP-N-acetyl-alpha-D-muramoyl-L-alanine + D-glutamate + ATP = UDP-N-acetyl-alpha-D-muramoyl-L-alanyl-D-glutamate + ADP + phosphate + H(+). It functions in the pathway cell wall biogenesis; peptidoglycan biosynthesis. Its function is as follows. Cell wall formation. Catalyzes the addition of glutamate to the nucleotide precursor UDP-N-acetylmuramoyl-L-alanine (UMA). The chain is UDP-N-acetylmuramoylalanine--D-glutamate ligase from Yersinia pestis bv. Antiqua (strain Antiqua).